The sequence spans 126 residues: Fluoride-specific ion channel FluC (126 aa).

The next 4 helical transmembrane spans lie at 3-23 (PLGF…RWGL), 36-56 (YGTL…VGFF), 68-88 (LLAI…SSEA), and 99-119 (WALL…ALGL). Residues Gly76 and Thr79 each contribute to the Na(+) site.

This sequence belongs to the fluoride channel Fluc/FEX (TC 1.A.43) family.

Its subcellular location is the cell inner membrane. It catalyses the reaction fluoride(in) = fluoride(out). With respect to regulation, na(+) is not transported, but it plays an essential structural role and its presence is essential for fluoride channel function. Functionally, fluoride-specific ion channel. Important for reducing fluoride concentration in the cell, thus reducing its toxicity. The polypeptide is Fluoride-specific ion channel FluC (Cupriavidus pinatubonensis (strain JMP 134 / LMG 1197) (Cupriavidus necator (strain JMP 134))).